The primary structure comprises 241 residues: Centromere protein H (241 aa).

Met-1 bears the N-acetylmethionine mark. Positions 1-24 (MEEQPRERSEAGAEACEEKRGLSQ) are disordered. Residues 28–186 (ERIEDRISLL…KEDVDKMENS (159 aa)) adopt a coiled-coil conformation. A Glycyl lysine isopeptide (Lys-Gly) (interchain with G-Cter in SUMO2) cross-link involves residue Lys-61. The residue at position 62 (Thr-62) is a Phosphothreonine.

It belongs to the CENP-H/MCM16 family. Self-associates. Component of the CENPA-NAC complex, at least composed of CENPA, CENPC, CENPH, CENPM, CENPN, CENPT and CENPU. The CENPA-NAC complex interacts with the CENPA-CAD complex, composed of CENPI, CENPK, CENPL, CENPO, CENPP, CENPQ, CENPR and CENPS. Interacts directly with CENPK. Interacts with KIF2C and NDC80. Interacts with TRIM36. Abundantly expressed in thymus, spleen, uterus, ovary, testis and muscle, and weakly expressed in small intestine, lung and stomach. Barely detectable expression in kidney, liver, skin and prostate gland. Not detected in brain, heart or adrenal gland. Also expressed weakly in various hematopoietic cell lines.

It is found in the nucleus. The protein resides in the chromosome. It localises to the centromere. Its subcellular location is the kinetochore. Component of the CENPA-NAC (nucleosome-associated) complex, a complex that plays a central role in assembly of kinetochore proteins, mitotic progression and chromosome segregation. The CENPA-NAC complex recruits the CENPA-CAD (nucleosome distal) complex and may be involved in incorporation of newly synthesized CENPA into centromeres. Required for chromosome congression and efficiently align the chromosomes on a metaphase plate. The sequence is that of Centromere protein H from Mus musculus (Mouse).